Reading from the N-terminus, the 272-residue chain is Phosphoglycolate phosphatase (272 aa).

The active-site Nucleophile is the D19. Residues D19, D21, and D182 each coordinate Mg(2+).

This sequence belongs to the HAD-like hydrolase superfamily. CbbY/CbbZ/Gph/YieH family. Requires Mg(2+) as cofactor.

It carries out the reaction 2-phosphoglycolate + H2O = glycolate + phosphate. It functions in the pathway organic acid metabolism; glycolate biosynthesis; glycolate from 2-phosphoglycolate: step 1/1. Specifically catalyzes the dephosphorylation of 2-phosphoglycolate. Is involved in the dissimilation of the intracellular 2-phosphoglycolate formed during the DNA repair of 3'-phosphoglycolate ends, a major class of DNA lesions induced by oxidative stress. This is Phosphoglycolate phosphatase from Pseudomonas putida (strain ATCC 47054 / DSM 6125 / CFBP 8728 / NCIMB 11950 / KT2440).